A 408-amino-acid polypeptide reads, in one-letter code: MRVRFGQYPNCGKRMVLEPGRLRPYSILRSFLDSEASAGLTLMFVAALALLLANSPFAPVYFDVLHRQVLGLTVLHWINDALMAVFFLLVGLEIKREFLDGQLATWSRRALPGIAALGGMVVPAVIFIAVNGGEPANLRGWAIPSATDIAFALGVLSLLGPRVPVSLKIFLTALAILDDLGAVLIIALFYTAELTPLMLILAAATLLGLAALNRFGVKPLAPYLVLGVVLWFFVLQSGIHATLAGVALALAIPLQASTGGGPTSPLHRLEHALNPWVAFLIVPVFGFANAGVSFAGLGLSALLDPVPLGVALGLFFGKQVGVFGFAWLAIWLKIADMPRYASWAHLYGVAVLCGIGFTMSLFIGLLAYPESAVLQDETKIGVLLGSTLAGLIGWLILRVTKAGFPERT.

12 helical membrane passes run 42–62 (LMFV…PVYF), 69–89 (VLGL…FFLL), 110–130 (ALPG…FIAV), 140–160 (GWAI…SLLG), 169–189 (IFLT…IALF), 192–212 (AELT…LAAL), 215–235 (FGVK…FFVL), 238–258 (GIHA…QAST), 277–297 (VAFL…FAGL), 312–332 (LGLF…AIWL), 346–366 (LYGV…IGLL), and 380–400 (IGVL…LRVT).

It belongs to the NhaA Na(+)/H(+) (TC 2.A.33) antiporter family.

The protein resides in the cell inner membrane. It carries out the reaction Na(+)(in) + 2 H(+)(out) = Na(+)(out) + 2 H(+)(in). Its function is as follows. Na(+)/H(+) antiporter that extrudes sodium in exchange for external protons. The protein is Na(+)/H(+) antiporter NhaA of Nitrobacter hamburgensis (strain DSM 10229 / NCIMB 13809 / X14).